We begin with the raw amino-acid sequence, 191 residues long: MKTLFDTKELLNEFDINLIGIDEAGRGALAGPMMMAACKLNKKLDGLCDSKKLSEKKREELYEIIIKNSNYLILAFSSEQIDTLGLSTCLKTGLKLIKKHFKAENNFLYDGNTNLGINGIKTQIKADTSILQVSAASILAKVSKDKVMNFLAKDFPCYEFEKNKAYGTKAHKEVIAKFGICKLHRKSFKLL.

One can recognise an RNase H type-2 domain in the interval 16–191 (INLIGIDEAG…KLHRKSFKLL (176 aa)). Residues D22, E23, and D110 each contribute to the a divalent metal cation site.

It belongs to the RNase HII family. Mn(2+) serves as cofactor. It depends on Mg(2+) as a cofactor.

The protein localises to the cytoplasm. It catalyses the reaction Endonucleolytic cleavage to 5'-phosphomonoester.. Its function is as follows. Endonuclease that specifically degrades the RNA of RNA-DNA hybrids. This chain is Ribonuclease HII, found in Campylobacter jejuni subsp. doylei (strain ATCC BAA-1458 / RM4099 / 269.97).